The chain runs to 2410 residues: Reducing polyketide synthase FUB1 (2410 aa).

Residues 1–42 (MTLSNGSNGANGTSNGNGAHPSANGFHNAANGGANNGSANGG) are compositionally biased toward low complexity. The interval 1-52 (MTLSNGSNGANGTSNGNGAHPSANGFHNAANGGANNGSANGGAEHDAGRPQV) is disordered. Residues 57–479 (SSAIAVIGVS…GANAHAVLDD (423 aa)) form the Ketosynthase family 3 (KS3) domain. Catalysis depends on for beta-ketoacyl synthase activity residues Cys230, His365, and His403. The interval 608–929 (TFIFTGQGAQ…FSAIKRKQDA (322 aa)) is malonyl-CoA:ACP transacylase (MAT) domain. The active-site For malonyltransferase activity is Ser699. The N-terminal hotdog fold stretch occupies residues 994-1127 (LELLGVRDPR…GLVSTSYKHD (134 aa)). In terms of domain architecture, PKS/mFAS DH spans 994-1307 (LELLGVRDPR…TVPLRGASDS (314 aa)). Positions 995-1302 (ELLGVRDPRS…LKGCKTVPLR (308 aa)) are dehydratase (DH) domain. The active-site Proton acceptor; for dehydratase activity is the His1026. The C-terminal hotdog fold stretch occupies residues 1155–1307 (LPSVDPTVFY…TVPLRGASDS (153 aa)). The Proton donor; for dehydratase activity role is filled by Asp1220. The enoyl reductase (ER) domain stretch occupies residues 1714-2026 (GLLDTLEYLS…SGGHVGKIVL (313 aa)). The tract at residues 2050 to 2226 (ATYVLIGGLG…AATSINLSLV (177 aa)) is ketoreductase (KR) domain. Residues 2329-2406 (EVYEIVLQQL…GFTKKVMAKS (78 aa)) form the Carrier domain. Ser2366 carries the post-translational modification O-(pantetheine 4'-phosphoryl)serine.

It participates in mycotoxin biosynthesis. Reducing polyketide synthase; part of the gene cluster that mediates the biosynthesis of fusaric acid, a mycotoxin with low to moderate toxicity to animals and humans, but with high phytotoxic properties. L-aspartate is suggested as fusaric acid amino acid precursor that is activated and further processed to O-acetyl-L-homoserine by cluster enzymes aspartate kinase FUB3 and homoserine O-acetyltransferase FUB5, as well as enzymes of the primary metabolism. The polyketide synthase (PKS) FUB1 generates the triketide trans-2-hexenal which is presumptively released by the hydrolase FUB4 and linked to the NRPS-bound amino acid precursor by NAD(P)-dependent dehydrogenase FUB6. FUB1, FUB4, and the non-canonical NRPS Fub8 may form an enzyme complex. Further processing of the NRPS-bound intermediate might be carried out by FUB6 and the sulfhydrylase FUB7, enabling a spontaneous electrocyclization to close the carbon backbone of fusaric acid. Dihydrofusaric acid is likely to be released via reduction by the thioester reductase (TR) domain of FUB8 whereupon the final oxidation to fusaric acid may (also) be performed by the FMN-dependent dehydrogenase FUB9. This chain is Reducing polyketide synthase FUB1, found in Gibberella fujikuroi (strain CBS 195.34 / IMI 58289 / NRRL A-6831) (Bakanae and foot rot disease fungus).